A 46-amino-acid chain; its full sequence is AFKDLKALGCKKAMNKFNKHTLLEYLLEEGNLSRPAVQLLGDVMSE.

N-linked (GlcNAc...) asparagine glycosylation occurs at Asn31.

This sequence belongs to the flavin monoamine oxidase family. FIG1 subfamily. It depends on FAD as a cofactor.

The protein localises to the secreted. It localises to the lysosome. It is found in the cytoplasmic vesicle. The protein resides in the secretory vesicle. Its subcellular location is the acrosome. It carries out the reaction an L-alpha-amino acid + O2 + H2O = a 2-oxocarboxylate + H2O2 + NH4(+). It catalyses the reaction L-tryptophan + O2 + H2O = indole-3-pyruvate + H2O2 + NH4(+). The enzyme catalyses L-phenylalanine + O2 + H2O = 3-phenylpyruvate + H2O2 + NH4(+). The catalysed reaction is L-tyrosine + O2 + H2O = 3-(4-hydroxyphenyl)pyruvate + H2O2 + NH4(+). It carries out the reaction L-arginine + O2 + H2O = 5-guanidino-2-oxopentanoate + H2O2 + NH4(+). The protein operates within amino-acid degradation; L-tryptophan degradation via pyruvate pathway. In terms of biological role, secreted L-amino-acid oxidase that acts as a key immunoregulator. Has preference for L-aromatic amino acids: converts phenylalanine (Phe), tyrosine (Tyr) and tryptophan (Trp) to phenylpyruvic acid (PP), hydroxyphenylpyruvic acid (HPP), and indole-3-pyruvic acid (I3P), respectively. Also has weak L-arginine oxidase activity. Acts as a negative regulator of anti-tumor immunity by mediating Trp degradation via an indole pyruvate pathway that activates the transcription factor AHR. IL4I1-mediated Trp catabolism generates I3P, giving rise to indole metabolites (indole-3-acetic acid (IAA) and indole-3-aldehyde (I3A)) and kynurenic acid, which act as ligands for AHR, a ligand-activated transcription factor that plays important roles in immunity and cancer. AHR activation by indoles following IL4I1-mediated Trp degradation enhances tumor progression by promoting cancer cell motility and suppressing adaptive immunity. Also has an immunoregulatory function in some immune cells, probably by mediating Trp degradation and promoting downstream AHR activation: inhibits T-cell activation and proliferation, promotes the differentiation of naive CD4(+) T-cells into FOXP3(+) regulatory T-cells (Treg) and regulates the development and function of B-cells. Also regulates M2 macrophage polarization by inhibiting T-cell activation. Also has antibacterial properties by inhibiting growth of Gram negative and Gram positive bacteria through the production of NH4(+) and H2O2. The chain is L-amino-acid oxidase from Mus spretus (Western Mediterranean mouse).